Reading from the N-terminus, the 339-residue chain is MTTRTESPTVVQLPPVYFPTALKVHPQIELMEERGLEWMARYGFCSDPVQATRVRDSRSAHFFGYLCPKADPDRLQAAVDWGYLMFAFDDVSSDGDSSALLDIAVRIVRTLEAPDANVLPSDNPYTAPIVDLATRVHRTCAPEHVRRLVDSHTKWLLGAAWECAVRQRPSINDYLSARVMYAGAEPTFTWFQLSEAVVVPEQEITSPRVRALTEMAGTVAAIDNDLYSHGKELWTRQSRSDLSGTGLDLPSCVALRDRIVARFFELRNEVLPTASPALARYLHNLTCALRGNFEWGLETERYSNPDGNHPGAVRTLGSVSNTPSAVGPPGIPSIDWWWR.

Asp-89, Asp-94, Asn-224, Ser-228, and Glu-232 together coordinate Mg(2+).

Belongs to the terpene synthase family. Requires Mg(2+) as cofactor.

It carries out the reaction (2E,6E,10E)-geranylgeranyl diphosphate = phomopsene + diphosphate. The enzyme catalyses (2E,6E,10E)-geranylgeranyl diphosphate = allokutznerene + diphosphate. Its pathway is secondary metabolite biosynthesis; terpenoid biosynthesis. Diterpene synthase that catalyzes the conversion of geranylgeranyl diphosphate (GGPP) to phomopsene, a diterpene previously reported from the fungus P.amygdali. Phomopsene is the main product, but the enzyme can also produce allokutznerene (about 50% of phomopsene production activity) and traces of spiroviolene. Cannot use geranyl diphosphate (GPP), farnesyl diphosphate (FPP) and geranylfarnesyl diphosphate (GFPP). This Allokutzneria albata (Kibdelosporangium albatum) protein is Phomopsene synthase.